We begin with the raw amino-acid sequence, 306 residues long: Protein-methionine-sulfoxide reductase catalytic subunit MsrP (306 aa).

The tat-type signal signal peptide spans 1–45 (MLIRHAPDLTDNDVTDHSLYLKRRTLMAGVAGLGVAGASASHAQA). Mo-molybdopterin-binding positions include asparagine 69, 72–73 (YE), cysteine 127, threonine 162, asparagine 210, arginine 215, and 226–228 (GIK).

This sequence belongs to the MsrP family. In terms of assembly, heterodimer of a catalytic subunit (MsrP) and a heme-binding subunit (MsrQ). It depends on Mo-molybdopterin as a cofactor. Post-translationally, predicted to be exported by the Tat system. The position of the signal peptide cleavage has not been experimentally proven.

It localises to the periplasm. It carries out the reaction L-methionyl-[protein] + a quinone + H2O = L-methionyl-(S)-S-oxide-[protein] + a quinol. The catalysed reaction is L-methionyl-[protein] + a quinone + H2O = L-methionyl-(R)-S-oxide-[protein] + a quinol. Part of the MsrPQ system that repairs oxidized periplasmic proteins containing methionine sulfoxide residues (Met-O), using respiratory chain electrons. Thus protects these proteins from oxidative-stress damage caused by reactive species of oxygen and chlorine generated by the host defense mechanisms. MsrPQ is essential for the maintenance of envelope integrity under bleach stress, rescuing a wide series of structurally unrelated periplasmic proteins from methionine oxidation. The catalytic subunit MsrP is non-stereospecific, being able to reduce both (R-) and (S-) diastereoisomers of methionine sulfoxide. The protein is Protein-methionine-sulfoxide reductase catalytic subunit MsrP of Caulobacter vibrioides (strain ATCC 19089 / CIP 103742 / CB 15) (Caulobacter crescentus).